Here is a 98-residue protein sequence, read N- to C-terminus: NADH-ubiquinone oxidoreductase chain 4L (98 aa).

3 helical membrane passes run 2–22 (PSIF…MLIF), 37–57 (MLSM…TMSF), and 61–81 (ILLL…LVTV).

The protein belongs to the complex I subunit 4L family. As to quaternary structure, core subunit of respiratory chain NADH dehydrogenase (Complex I) which is composed of 45 different subunits.

Its subcellular location is the mitochondrion inner membrane. It carries out the reaction a ubiquinone + NADH + 5 H(+)(in) = a ubiquinol + NAD(+) + 4 H(+)(out). In terms of biological role, core subunit of the mitochondrial membrane respiratory chain NADH dehydrogenase (Complex I) which catalyzes electron transfer from NADH through the respiratory chain, using ubiquinone as an electron acceptor. Part of the enzyme membrane arm which is embedded in the lipid bilayer and involved in proton translocation. The protein is NADH-ubiquinone oxidoreductase chain 4L (MT-ND4L) of Varecia rubra (Red ruffed lemur).